A 142-amino-acid chain; its full sequence is Small ribosomal subunit protein uS12 (142 aa).

This sequence belongs to the universal ribosomal protein uS12 family. As to quaternary structure, part of the 30S ribosomal subunit.

Its function is as follows. With S4 and S5 plays an important role in translational accuracy. Located at the interface of the 30S and 50S subunits. The protein is Small ribosomal subunit protein uS12 of Methanospirillum hungatei JF-1 (strain ATCC 27890 / DSM 864 / NBRC 100397 / JF-1).